The chain runs to 252 residues: T-box transcription factor mls-1 (252 aa).

The segment at residues leucine 40–glutamate 210 is a DNA-binding region (T-box).

As to quaternary structure, may interact with unc-37.

The protein localises to the nucleus. Functionally, probable transcription factor required for the cell fate specification of non-striated uterine muscle precursor cells. Furthermore, may function with the transcriptional corepressor unc-37. This Caenorhabditis elegans protein is T-box transcription factor mls-1.